The following is a 1849-amino-acid chain: Immunoglobulin A1 protease autotransporter (1849 aa).

The signal sequence occupies residues 1–25 (MLNKKFKLNFIALTVAYALTPYTEA). One can recognise a Peptidase S6 domain in the interval 26–343 (ALVRDDVDYQ…NIYKHEFAEK (318 aa)). The active site involves Ser-299. The tract at residues 998 to 1538 (VEKRNQTVDT…EPVELPTENA (541 aa)) is disordered. The span at 1004-1015 (TVDTTNITTPND) shows a compositional bias: polar residues. Over residues 1066-1077 (EETNTANSTETA) the composition is skewed to low complexity. Composition is skewed to polar residues over residues 1079-1097 (KSDT…VPSE) and 1138-1151 (VEAN…TQSE). Over residues 1152 to 1166 (GKTEETQTAETKSEP) the composition is skewed to basic and acidic residues. Residues 1167-1184 (TESVTVSENQPEKTVSQS) are compositionally biased toward polar residues. The span at 1185 to 1205 (TEDKVVVEKEEKAKVETEETQ) shows a compositional bias: basic and acidic residues. The segment covering 1237-1268 (ALQQTQPTTVAAAETTSPNSKPAEETQQPSEK) has biased composition (polar residues). A compositionally biased stretch (basic and acidic residues) spans 1291–1301 (ETAKVEKEKTQ). Low complexity-rich tracts occupy residues 1314-1330 (QEQP…PQAE), 1345-1361 (PQPQ…VPTT), and 1369-1381 (KPAA…AKPQ). Residues 1388-1437 (NVSTVNTKEPQSQTSATVSTEQPAKETSSNVEQPAPENSINTGSATTMTE) are compositionally biased toward polar residues. Residues 1438-1457 (TAEKSDKPQMETVTENDRQP) are compositionally biased toward basic and acidic residues. Residues 1493-1513 (EETTVASTQETTVDNSVSTPK) are compositionally biased toward low complexity. Positions 1597-1849 (NNEGQYNVWI…TAEVKLSFSF (253 aa)) constitute an Autotransporter domain.

It is found in the periplasm. It localises to the secreted. Its subcellular location is the cell surface. The protein localises to the cell outer membrane. The enzyme catalyses Cleavage of immunoglobulin A molecules at certain Pro-|-Xaa bonds in the hinge region. No small molecule substrates are known.. Functionally, virulence factor; cleaves host immunoglobulin A producing intact Fc and Fab fragments. In Haemophilus influenzae, this protein is Immunoglobulin A1 protease autotransporter (iga).